A 132-amino-acid polypeptide reads, in one-letter code: Phosphomevalonate dehydratase small subunit (132 aa).

Catalysis depends on S62, which acts as the Proton acceptor.

Belongs to the AcnX type II small subunit family. As to quaternary structure, heterodimer composed of a large subunit (PMDh-L) and a small subunit (PMDh-S).

It carries out the reaction (R)-5-phosphomevalonate = (2E)-3-methyl-5-phosphooxypent-2-enoate + H2O. Its pathway is isoprenoid biosynthesis; isopentenyl diphosphate biosynthesis via mevalonate pathway. Component of a hydro-lyase that catalyzes the dehydration of mevalonate 5-phosphate (MVA5P) to form trans-anhydromevalonate 5-phosphate (tAHMP). Involved in the archaeal mevalonate (MVA) pathway, which provides fundamental precursors for isoprenoid biosynthesis, such as isopentenyl diphosphate (IPP) and dimethylallyl diphosphate (DMAPP). The sequence is that of Phosphomevalonate dehydratase small subunit from Methanocella arvoryzae (strain DSM 22066 / NBRC 105507 / MRE50).